A 293-amino-acid polypeptide reads, in one-letter code: Probable rRNA-processing protein EBP2 homolog (293 aa).

The span at 1 to 37 shows a compositional bias: acidic residues; it reads MSLEEDIVSDDEMNMIDEDDATDSEAESLSDSDTENE. 2 disordered regions span residues 1–45 and 150–293; these read MSLE…LAEP and IEES…RQKR. Residues 135 to 190 adopt a coiled-coil conformation; the sequence is HMEKVKSRLLHEKKQIEESEERRKARDNKRMAKEVQSQKMKERAKEKKDNIESVKK. Composition is skewed to basic and acidic residues over residues 150 to 167, 173 to 189, and 247 to 256; these read IEES…RMAK, KMKE…ESVK, and KKREFRDSKF. The span at 265–275 shows a compositional bias: polar residues; sequence SKQNTAETTND.

Belongs to the EBP2 family. As to quaternary structure, interacts with NSN1.

It localises to the nucleus. The protein resides in the nucleolus. Its function is as follows. Required for the processing of the 27S pre-rRNA. Plays an important role in plant growth and senescence by modulating ribosome biogenesis in nucleolus. Associates with ribosomes. The sequence is that of Probable rRNA-processing protein EBP2 homolog from Arabidopsis thaliana (Mouse-ear cress).